A 701-amino-acid chain; its full sequence is MHSDELLVEILVEELPAQALLNEYKEMPKKLHALFNKRALEVGNIEIFYTPRRLCLLIKDFPLLTQETKEEFFGPPVKIACNNEDKTQGLNALGLGFYQKLGLKDHQHFQTAFKNNKEVLYHAKIHEKEPTKDLIMPIVLEFLEDLNFGKSMRWGNVEKSFIRPIHNICVLFNGENFNDIEVKEYGFKTKQATKVHRQESFDFIEVDSPKAYFEVLEKNHVILDPKKREAKILQEIKELETEHHISIEIDRDLLDEVVAITEYPSALLGEFDKAFLKLPSEIITTSMKENQRYFATFCQKSQEESPTLHNGFIVVSNAINKDKQKIILGNQKVLKARLSDAVFFYENDLKKPLDNAPLESVVFVQGLGTLKDKMERESIIAQYLTQKYAPSLNMPLEKALELVKRAVQIAKADLLSEVVYEFSELQGIMGYYYALKQNENELVALSLKEQYLPASENAPLPSSVFSAIVALSLKLDSLFSLFSVGKIPSGSKDPFALRRLSFGLLKIIAHYGLEFDLKADLKSLFEKVGVYQSFDLEILEKFLLERFNNLIDCNPSIIRSVLNTNERDIVKIIQKVKALKRFLDDPKNAQKKELLFSAFKRLANINKDRNPNESSEFSISLFKESQEHALFEAFNAIKTSAFEGLDSKIEAYFGLHAPLEEYFKSVLVMDKDIEIQKNRKNFLWSVYQSFLEIGDIKEIAI.

The protein belongs to the class-II aminoacyl-tRNA synthetase family. As to quaternary structure, tetramer of two alpha and two beta subunits.

The protein localises to the cytoplasm. The catalysed reaction is tRNA(Gly) + glycine + ATP = glycyl-tRNA(Gly) + AMP + diphosphate. The polypeptide is Glycine--tRNA ligase beta subunit (Helicobacter pylori (strain G27)).